The primary structure comprises 328 residues: tRNA dimethylallyltransferase (328 aa).

25 to 32 is a binding site for ATP; it reads GPTAVGKT. 27–32 lines the substrate pocket; that stretch reads TAVGKT. The tract at residues 50–53 is interaction with substrate tRNA; the sequence is DSMQ.

This sequence belongs to the IPP transferase family. Monomer. The cofactor is Mg(2+).

The enzyme catalyses adenosine(37) in tRNA + dimethylallyl diphosphate = N(6)-dimethylallyladenosine(37) in tRNA + diphosphate. Catalyzes the transfer of a dimethylallyl group onto the adenine at position 37 in tRNAs that read codons beginning with uridine, leading to the formation of N6-(dimethylallyl)adenosine (i(6)A). The polypeptide is tRNA dimethylallyltransferase (Halothermothrix orenii (strain H 168 / OCM 544 / DSM 9562)).